A 296-amino-acid chain; its full sequence is Nucleotide-binding protein spyM18_0713 (296 aa).

Gly-13 to Thr-20 is an ATP binding site. Asp-63–Ser-66 contributes to the GTP binding site.

Belongs to the RapZ-like family.

Its function is as follows. Displays ATPase and GTPase activities. The protein is Nucleotide-binding protein spyM18_0713 of Streptococcus pyogenes serotype M18 (strain MGAS8232).